The following is a 102-amino-acid chain: Urease subunit beta (102 aa).

It belongs to the urease beta subunit family. In terms of assembly, heterotrimer of UreA (gamma), UreB (beta) and UreC (alpha) subunits. Three heterotrimers associate to form the active enzyme.

It is found in the cytoplasm. It catalyses the reaction urea + 2 H2O + H(+) = hydrogencarbonate + 2 NH4(+). It functions in the pathway nitrogen metabolism; urea degradation; CO(2) and NH(3) from urea (urease route): step 1/1. The polypeptide is Urease subunit beta (Acinetobacter baumannii (strain ACICU)).